A 537-amino-acid polypeptide reads, in one-letter code: 2-isopropylmalate synthase (537 aa).

The 266-residue stretch at 8–273 folds into the Pyruvate carboxyltransferase domain; sequence IIIFDTTLRD…FLGRPVDSME (266 aa). 4 residues coordinate Mn(2+): D17, H208, H210, and N244. A regulatory domain region spans residues 408–537; it reads RLELVQVSCG…PSEPVLTSKN (130 aa).

It belongs to the alpha-IPM synthase/homocitrate synthase family. LeuA type 1 subfamily. In terms of assembly, homodimer. It depends on Mn(2+) as a cofactor.

It localises to the cytoplasm. The enzyme catalyses 3-methyl-2-oxobutanoate + acetyl-CoA + H2O = (2S)-2-isopropylmalate + CoA + H(+). It participates in amino-acid biosynthesis; L-leucine biosynthesis; L-leucine from 3-methyl-2-oxobutanoate: step 1/4. In terms of biological role, catalyzes the condensation of the acetyl group of acetyl-CoA with 3-methyl-2-oxobutanoate (2-ketoisovalerate) to form 3-carboxy-3-hydroxy-4-methylpentanoate (2-isopropylmalate). This chain is 2-isopropylmalate synthase, found in Crocosphaera subtropica (strain ATCC 51142 / BH68) (Cyanothece sp. (strain ATCC 51142)).